A 458-amino-acid polypeptide reads, in one-letter code: ATP synthase subunit beta (458 aa).

Gly-148 to Thr-155 provides a ligand contact to ATP.

Belongs to the ATPase alpha/beta chains family. F-type ATPases have 2 components, CF(1) - the catalytic core - and CF(0) - the membrane proton channel. CF(1) has five subunits: alpha(3), beta(3), gamma(1), delta(1), epsilon(1). CF(0) has three main subunits: a(1), b(2) and c(9-12). The alpha and beta chains form an alternating ring which encloses part of the gamma chain. CF(1) is attached to CF(0) by a central stalk formed by the gamma and epsilon chains, while a peripheral stalk is formed by the delta and b chains.

It is found in the cell inner membrane. It catalyses the reaction ATP + H2O + 4 H(+)(in) = ADP + phosphate + 5 H(+)(out). Produces ATP from ADP in the presence of a proton gradient across the membrane. The catalytic sites are hosted primarily by the beta subunits. The sequence is that of ATP synthase subunit beta from Alkalilimnicola ehrlichii (strain ATCC BAA-1101 / DSM 17681 / MLHE-1).